Consider the following 442-residue polypeptide: Syndecan-3 (442 aa).

2 disordered regions span residues 1 to 24 (MKPG…AAAG) and 57 to 87 (RPVD…SGYF). The Extracellular segment spans residues 1–387 (MKPGPPHRAG…SILERKEVLV (387 aa)). Over residues 13-24 (HGAGAGAGAAAG) the composition is skewed to gly residues. Residues 63–77 (GSGDDDSFPDDELDD) show a composition bias toward acidic residues. O-linked (Xyl...) (glycosaminoglycan) serine glycans are attached at residues Ser80, Ser82, Ser84, and Ser91. Residue Ser108 is glycosylated (O-linked (GalNAc) serine; by GALNT13). Residues Thr109 and Thr110 are each glycosylated (O-linked (GalNAc) threonine; by GALNT13). 3 disordered regions span residues 150-173 (EEPS…STGD), 225-326 (TTPE…ETTQ), and 340-367 (AAKA…AIDS). Composition is skewed to low complexity over residues 156-173 (ATTV…STGD), 225-238 (TTPE…TAAV), and 275-286 (TLPLGTTAPGPT). The O-linked (GalNAc) serine; by GALNT13 glycan is linked to Ser160. 3 O-linked (GalNAc) threonine; by GALNT13 glycosylation sites follow: Thr161, Thr162, and Thr169. Ser170 carries an O-linked (GalNAc) serine; by GALNT13 glycan. A glycan (O-linked (GalNAc) threonine; by GALNT13) is linked at Thr171. Residues 288–299 (VAQTPTPETFLT) show a composition bias toward polar residues. O-linked (Xyl...) (glycosaminoglycan) serine glycosylation is found at Ser314 and Ser367. The chain crosses the membrane as a helical span at residues 388–408 (AVIVGGVVGALFAAFLVTLLI). 4 positions are modified to phosphotyrosine: Tyr409, Tyr419, Tyr431, and Tyr441. Topologically, residues 409-442 (YRMKKKDEGSYTLEEPKQASVTYQKPDKQEEFYA) are cytoplasmic. Residues 419–442 (YTLEEPKQASVTYQKPDKQEEFYA) form a disordered region. The segment covering 433-442 (KPDKQEEFYA) has biased composition (basic and acidic residues).

It belongs to the syndecan proteoglycan family. In terms of assembly, interacts with TIAM1. Interacts with PTN (via heparan sulfate chains); this interaction mediates the neurite outgrowth-promoting signal from PTN to the cytoskeleton of growing neurites; this interaction mediates osteoblast recruitment. Interacts with MDK; this interaction induces SDC3 clustering; this interaction induces neuronal cell adhesion and neurite outgrowth. O-glycosylated within the Thr/Ser-rich region which could interact with lectin domains on other molecules. Expressed in the nervous system, the adrenal gland, and the spleen.

It is found in the cell membrane. Its function is as follows. Cell surface proteoglycan that may bear heparan sulfate. May have a role in the organization of cell shape by affecting the actin cytoskeleton, possibly by transferring signals from the cell surface in a sugar-dependent mechanism. In Homo sapiens (Human), this protein is Syndecan-3 (SDC3).